The sequence spans 320 residues: 3-ketodihydrosphingosine reductase TSC10 (320 aa).

Topologically, residues 1–254 (MKFTLEDQVV…IIAKSLARGD (254 aa)) are cytoplasmic. Leu-11 is a binding site for NADP(+). Residues Gly-14, Ser-16, and Gly-18 each coordinate NADPH. Positions 14–18 (GGSQG) match the GXSXG motif. Position 19 (Leu-19) interacts with NADP(+). Positions 41, 45, 89, and 90 each coordinate NADPH. Asp-89 lines the NADP(+) pocket. Residue Ser-166 is the Proton donor of the active site. Positions 180, 184, and 213 each coordinate NADP(+). Catalysis depends on Tyr-180, which acts as the Proton acceptor. Catalysis depends on Lys-184, which acts as the Lowers pKa of active site Tyr. Residues 255–275 (DDVFTDFVGWMIMGMDLGLTA) form a helical membrane-spanning segment. The Lumenal segment spans residues 276–279 (KKSR). A helical membrane pass occupies residues 280 to 300 (FVPLQWIFGVLSNILVVPFYM). The Cytoplasmic segment spans residues 301–320 (VGCSWYIRKWFRENDGKKAN).

This sequence belongs to the short-chain dehydrogenases/reductases (SDR) family. Dimer or tetramer.

It is found in the endoplasmic reticulum membrane. It catalyses the reaction sphinganine + NADP(+) = 3-oxosphinganine + NADPH + H(+). It functions in the pathway lipid metabolism; sphingolipid metabolism. Functionally, catalyzes the reduction of 3'-oxosphinganine (3-ketodihydrosphingosine/KDS) to sphinganine (dihydrosphingosine/DHS), the second step of de novo sphingolipid biosynthesis. This is 3-ketodihydrosphingosine reductase TSC10 from Saccharomyces cerevisiae (strain ATCC 204508 / S288c) (Baker's yeast).